The primary structure comprises 241 residues: Probable pectate lyase D (241 aa).

An N-terminal signal peptide occupies residues 1–17; that stretch reads MYQKSLLFSLLATSALA. Asn215 is a glycosylation site (N-linked (GlcNAc...) asparagine). The interval 215–241 is disordered; it reads NNSGDEPEEVSEGPSDACQYSEPLSSC.

This sequence belongs to the polysaccharide lyase 3 family. The cofactor is Ca(2+).

The protein localises to the secreted. The enzyme catalyses Eliminative cleavage of (1-&gt;4)-alpha-D-galacturonan to give oligosaccharides with 4-deoxy-alpha-D-galact-4-enuronosyl groups at their non-reducing ends.. In terms of biological role, pectinolytic enzyme consist of four classes of enzymes: pectin lyase, polygalacturonase, pectin methylesterase and rhamnogalacturonase. Among pectinolytic enzymes, pectin lyase is the most important in depolymerization of pectin, since it cleaves internal glycosidic bonds of highly methylated pectins. Favors pectate, the anion, over pectin, the methyl ester. The sequence is that of Probable pectate lyase D (plyD) from Neosartorya fischeri (strain ATCC 1020 / DSM 3700 / CBS 544.65 / FGSC A1164 / JCM 1740 / NRRL 181 / WB 181) (Aspergillus fischerianus).